A 129-amino-acid polypeptide reads, in one-letter code: Glycine cleavage system H protein (129 aa).

Residues 24 to 106 enclose the Lipoyl-binding domain; the sequence is HAVVGITDFA…YDGGWLFKLA (83 aa). An N6-lipoyllysine modification is found at lysine 65.

This sequence belongs to the GcvH family. The glycine cleavage system is composed of four proteins: P, T, L and H. (R)-lipoate serves as cofactor.

In terms of biological role, the glycine cleavage system catalyzes the degradation of glycine. The H protein shuttles the methylamine group of glycine from the P protein to the T protein. The polypeptide is Glycine cleavage system H protein (Hydrogenovibrio crunogenus (strain DSM 25203 / XCL-2) (Thiomicrospira crunogena)).